The chain runs to 364 residues: Histidinol-phosphate aminotransferase (364 aa).

The residue at position 224 (Lys-224) is an N6-(pyridoxal phosphate)lysine.

The protein belongs to the class-II pyridoxal-phosphate-dependent aminotransferase family. Histidinol-phosphate aminotransferase subfamily. Homodimer. It depends on pyridoxal 5'-phosphate as a cofactor.

It catalyses the reaction L-histidinol phosphate + 2-oxoglutarate = 3-(imidazol-4-yl)-2-oxopropyl phosphate + L-glutamate. The protein operates within amino-acid biosynthesis; L-histidine biosynthesis; L-histidine from 5-phospho-alpha-D-ribose 1-diphosphate: step 7/9. This Anaeromyxobacter sp. (strain Fw109-5) protein is Histidinol-phosphate aminotransferase.